The following is a 91-amino-acid chain: Large ribosomal subunit protein bL27 (91 aa).

The interval 1–21 (MAHKKAGGSSRNGRDSESKRL) is disordered.

This sequence belongs to the bacterial ribosomal protein bL27 family.

The protein is Large ribosomal subunit protein bL27 of Azoarcus sp. (strain BH72).